Consider the following 179-residue polypeptide: Large ribosomal subunit protein uL6 (179 aa).

It belongs to the universal ribosomal protein uL6 family. Part of the 50S ribosomal subunit.

Functionally, this protein binds to the 23S rRNA, and is important in its secondary structure. It is located near the subunit interface in the base of the L7/L12 stalk, and near the tRNA binding site of the peptidyltransferase center. The protein is Large ribosomal subunit protein uL6 of Geobacter metallireducens (strain ATCC 53774 / DSM 7210 / GS-15).